The chain runs to 129 residues: Glycine cleavage system H protein (129 aa).

The Lipoyl-binding domain occupies Thr24–Lys106. The residue at position 65 (Lys65) is an N6-lipoyllysine.

Belongs to the GcvH family. As to quaternary structure, the glycine cleavage system is composed of four proteins: P, T, L and H. (R)-lipoate is required as a cofactor.

The glycine cleavage system catalyzes the degradation of glycine. The H protein shuttles the methylamine group of glycine from the P protein to the T protein. The polypeptide is Glycine cleavage system H protein (Salmonella arizonae (strain ATCC BAA-731 / CDC346-86 / RSK2980)).